A 902-amino-acid chain; its full sequence is 3'-5' exonuclease DinG (902 aa).

An Exonuclease domain is found at 8–161 (VVDLETTGNQ…DEDATTTAKL (154 aa)). Residues 241–496 (KNVTQSLNLT…KAVDKLEQQR (256 aa)) enclose the Helicase ATP-binding domain. 276 to 283 (APLGSGKS) is an ATP binding site. Residues 448–451 (DEAH) carry the DEAH box motif. Residues 714 to 883 (YIVEYITVTQ…HFKQRKGNIK (170 aa)) enclose the Helicase C-terminal domain.

Belongs to the helicase family. DinG subfamily. Type 2 sub-subfamily.

3'-5' exonuclease. This Staphylococcus epidermidis (strain ATCC 35984 / DSM 28319 / BCRC 17069 / CCUG 31568 / BM 3577 / RP62A) protein is 3'-5' exonuclease DinG.